Consider the following 372-residue polypeptide: Chaperone protein DnaJ (372 aa).

The 65-residue stretch at 5-69 (DYYEVLGVDR…QKKARYDQFG (65 aa)) folds into the J domain. The segment at 129 to 211 (GKETEIEIPR…CSGKGKVRKR (83 aa)) adopts a CR-type zinc-finger fold. Residues Cys-142, Cys-145, Cys-159, Cys-162, Cys-185, Cys-188, Cys-199, and Cys-202 each coordinate Zn(2+). CXXCXGXG motif repeat units follow at residues 142 to 149 (CGTCHGSG), 159 to 166 (CSHCGGSG), 185 to 192 (CNYCEGTG), and 199 to 206 (CATCSGKG).

This sequence belongs to the DnaJ family. As to quaternary structure, homodimer. The cofactor is Zn(2+).

The protein resides in the cytoplasm. In terms of biological role, participates actively in the response to hyperosmotic and heat shock by preventing the aggregation of stress-denatured proteins and by disaggregating proteins, also in an autonomous, DnaK-independent fashion. Unfolded proteins bind initially to DnaJ; upon interaction with the DnaJ-bound protein, DnaK hydrolyzes its bound ATP, resulting in the formation of a stable complex. GrpE releases ADP from DnaK; ATP binding to DnaK triggers the release of the substrate protein, thus completing the reaction cycle. Several rounds of ATP-dependent interactions between DnaJ, DnaK and GrpE are required for fully efficient folding. Also involved, together with DnaK and GrpE, in the DNA replication of plasmids through activation of initiation proteins. This is Chaperone protein DnaJ from Shouchella clausii (strain KSM-K16) (Alkalihalobacillus clausii).